We begin with the raw amino-acid sequence, 319 residues long: Annexin A4 (319 aa).

At A2 the chain carries N-acetylalanine. Phosphothreonine is present on T7. S12 carries the phosphoserine modification. Annexin repeat units lie at residues F14–T85, P86–A157, A169–K241, and N245–G316. An N6-acetyllysine mark is found at K213, K293, and K300.

This sequence belongs to the annexin family.

It localises to the zymogen granule membrane. In terms of biological role, calcium/phospholipid-binding protein which promotes membrane fusion and is involved in exocytosis. The chain is Annexin A4 from Homo sapiens (Human).